A 159-amino-acid polypeptide reads, in one-letter code: uncharacterized protein (159 aa).

This is an uncharacterized protein from Caenorhabditis elegans.